The following is a 321-amino-acid chain: DNA repair and recombination protein RadA (321 aa).

111 to 118 (GEFGSGKT) provides a ligand contact to ATP.

It belongs to the eukaryotic RecA-like protein family.

Functionally, involved in DNA repair and in homologous recombination. Binds and assemble on single-stranded DNA to form a nucleoprotein filament. Hydrolyzes ATP in a ssDNA-dependent manner and promotes DNA strand exchange between homologous DNA molecules. The polypeptide is DNA repair and recombination protein RadA (Sulfolobus acidocaldarius (strain ATCC 33909 / DSM 639 / JCM 8929 / NBRC 15157 / NCIMB 11770)).